The primary structure comprises 159 residues: SsrA-binding protein (159 aa).

The span at leucine 137–glutamate 147 shows a compositional bias: basic and acidic residues. Positions leucine 137 to aspartate 159 are disordered.

It belongs to the SmpB family.

It localises to the cytoplasm. Required for rescue of stalled ribosomes mediated by trans-translation. Binds to transfer-messenger RNA (tmRNA), required for stable association of tmRNA with ribosomes. tmRNA and SmpB together mimic tRNA shape, replacing the anticodon stem-loop with SmpB. tmRNA is encoded by the ssrA gene; the 2 termini fold to resemble tRNA(Ala) and it encodes a 'tag peptide', a short internal open reading frame. During trans-translation Ala-aminoacylated tmRNA acts like a tRNA, entering the A-site of stalled ribosomes, displacing the stalled mRNA. The ribosome then switches to translate the ORF on the tmRNA; the nascent peptide is terminated with the 'tag peptide' encoded by the tmRNA and targeted for degradation. The ribosome is freed to recommence translation, which seems to be the essential function of trans-translation. The polypeptide is SsrA-binding protein (Nocardioides sp. (strain ATCC BAA-499 / JS614)).